The following is a 288-amino-acid chain: MALFSKKDKYIRITPNNSLKSSVSRNIPEVPDELFAKCPACKHMIYQKDLGPAKICPTCSYNFRISAQERLTLTVDEGSFQELFTDIETKDPLRFPGYQAKLQKARQATGLHEAVLTGTALVKGQRLALAIMDSHFIMASMGTVVGEKITRLFELAINERLPVIIFTASGGARMQEGIMSLMQMAKVSAAVKRHSNAGLFYLTILTDPTTGGVTASFAMEGDMIIAEPQSLVGFAGRRVIETTVRENLPDDFQKAEFLKEHGFVDAIVKRTDLRDRIAHLVAFHGGVS.

Positions 34 to 288 constitute a CoA carboxyltransferase N-terminal domain; that stretch reads LFAKCPACKH…HLVAFHGGVS (255 aa). Zn(2+) is bound by residues C38, C41, C56, and C59. The C4-type zinc-finger motif lies at 38-59; the sequence is CPACKHMIYQKDLGPAKICPTC.

Belongs to the AccD/PCCB family. As to quaternary structure, acetyl-CoA carboxylase is a heterohexamer composed of biotin carboxyl carrier protein (AccB), biotin carboxylase (AccC) and two subunits each of ACCase subunit alpha (AccA) and ACCase subunit beta (AccD). Zn(2+) is required as a cofactor.

It localises to the cytoplasm. The enzyme catalyses N(6)-carboxybiotinyl-L-lysyl-[protein] + acetyl-CoA = N(6)-biotinyl-L-lysyl-[protein] + malonyl-CoA. It participates in lipid metabolism; malonyl-CoA biosynthesis; malonyl-CoA from acetyl-CoA: step 1/1. Its function is as follows. Component of the acetyl coenzyme A carboxylase (ACC) complex. Biotin carboxylase (BC) catalyzes the carboxylation of biotin on its carrier protein (BCCP) and then the CO(2) group is transferred by the transcarboxylase to acetyl-CoA to form malonyl-CoA. In Streptococcus equi subsp. zooepidemicus (strain MGCS10565), this protein is Acetyl-coenzyme A carboxylase carboxyl transferase subunit beta.